The sequence spans 315 residues: Phosphatidylglycerol--prolipoprotein diacylglyceryl transferase (315 aa).

The next 2 helical transmembrane spans lie at 19–39 (FTIH…VWIL) and 93–113 (VWEG…VAFL). An a 1,2-diacyl-sn-glycero-3-phospho-(1'-sn-glycerol)-binding site is contributed by R141. Transmembrane regions (helical) follow at residues 188-208 (LFHP…ALII) and 256-276 (VWTA…LYQY).

Belongs to the Lgt family.

The protein resides in the cell membrane. It carries out the reaction L-cysteinyl-[prolipoprotein] + a 1,2-diacyl-sn-glycero-3-phospho-(1'-sn-glycerol) = an S-1,2-diacyl-sn-glyceryl-L-cysteinyl-[prolipoprotein] + sn-glycerol 1-phosphate + H(+). It functions in the pathway protein modification; lipoprotein biosynthesis (diacylglyceryl transfer). Its function is as follows. Catalyzes the transfer of the diacylglyceryl group from phosphatidylglycerol to the sulfhydryl group of the N-terminal cysteine of a prolipoprotein, the first step in the formation of mature lipoproteins. The protein is Phosphatidylglycerol--prolipoprotein diacylglyceryl transferase of Bifidobacterium longum (strain DJO10A).